A 282-amino-acid polypeptide reads, in one-letter code: NADPH-dependent 7-cyano-7-deazaguanine reductase (282 aa).

Substrate is bound at residue 88–90 (IES). 90–91 (SK) lines the NADPH pocket. The active-site Thioimide intermediate is Cys190. Catalysis depends on Asp197, which acts as the Proton donor. 229 to 230 (HE) is a substrate binding site. 258–259 (RG) contacts NADPH.

Belongs to the GTP cyclohydrolase I family. QueF type 2 subfamily. Homodimer.

The protein resides in the cytoplasm. The catalysed reaction is 7-aminomethyl-7-carbaguanine + 2 NADP(+) = 7-cyano-7-deazaguanine + 2 NADPH + 3 H(+). The protein operates within tRNA modification; tRNA-queuosine biosynthesis. In terms of biological role, catalyzes the NADPH-dependent reduction of 7-cyano-7-deazaguanine (preQ0) to 7-aminomethyl-7-deazaguanine (preQ1). The chain is NADPH-dependent 7-cyano-7-deazaguanine reductase from Shigella flexneri serotype 5b (strain 8401).